The primary structure comprises 165 residues: UPF0114 protein in repA1-repA2 intergenic region (165 aa).

3 helical membrane-spanning segments follow: residues 10–32 (YASR…LLTL), 53–75 (LILI…MVMF), and 136–155 (IMWC…GMAC).

Belongs to the UPF0114 family.

It localises to the cell membrane. The polypeptide is UPF0114 protein in repA1-repA2 intergenic region (Buchnera aphidicola subsp. Geoica urticularia).